We begin with the raw amino-acid sequence, 216 residues long: Large ribosomal subunit protein uL3 (216 aa).

This sequence belongs to the universal ribosomal protein uL3 family. As to quaternary structure, part of the 50S ribosomal subunit. Forms a cluster with proteins L14 and L19.

Its function is as follows. One of the primary rRNA binding proteins, it binds directly near the 3'-end of the 23S rRNA, where it nucleates assembly of the 50S subunit. The sequence is that of Large ribosomal subunit protein uL3 from Symbiobacterium thermophilum (strain DSM 24528 / JCM 14929 / IAM 14863 / T).